We begin with the raw amino-acid sequence, 882 residues long: Probable LRR receptor-like serine/threonine-protein kinase At1g12460 (882 aa).

The signal sequence occupies residues 1–21 (MRKVHLFLVLVHFIYISTSRS). Residues 22 to 515 (DSISERDILL…SRNSDALSIS (494 aa)) are Extracellular-facing. N-linked (GlcNAc...) asparagine glycosylation occurs at Asn-76. LRR repeat units lie at residues 92-113 (FIRV…DYFK), 116-138 (TLWT…ISEL), 140-162 (SLRF…LFKF), 165-187 (KTKF…IVNC), 189-210 (NLVG…RICD), 213-235 (VLEY…IQKC), 237-258 (RLIL…AVLT), 261-283 (NITY…VDCS), 285-308 (SLEF…MGCK), 309-331 (SLKL…IGKM), 333-355 (SLSV…IGSL), 357-379 (FLQV…ISNC), 381-404 (VLLE…LNLT), 405-427 (NIKI…LGNL), 429-451 (KVQF…LGSL), and 453-475 (TLTH…PMIQ). An N-linked (GlcNAc...) asparagine glycan is attached at Asn-121. N-linked (GlcNAc...) asparagine glycosylation is found at Asn-261 and Asn-266. N-linked (GlcNAc...) asparagine glycans are attached at residues Asn-321 and Asn-341. 3 N-linked (GlcNAc...) asparagine glycosylation sites follow: Asn-402, Asn-417, and Asn-426. N-linked (GlcNAc...) asparagine glycosylation is found at Asn-458 and Asn-463. The chain crosses the membrane as a helical span at residues 516–536 (VIIVIIAAAVILFGVCIVLAL). The Cytoplasmic segment spans residues 537–882 (NLRARKRRKD…LESIRNGFGS (346 aa)). Position 589 is a phosphothreonine (Thr-589). One can recognise a Protein kinase domain in the interval 593–876 (LDKENIIGMG…AEVVQVLESI (284 aa)). Residues 599–607 (IGMGSIGSV) and Lys-621 contribute to the ATP site. Tyr-770 carries the phosphotyrosine modification.

It belongs to the protein kinase superfamily. Ser/Thr protein kinase family.

The protein resides in the cell membrane. It carries out the reaction L-seryl-[protein] + ATP = O-phospho-L-seryl-[protein] + ADP + H(+). The catalysed reaction is L-threonyl-[protein] + ATP = O-phospho-L-threonyl-[protein] + ADP + H(+). The chain is Probable LRR receptor-like serine/threonine-protein kinase At1g12460 from Arabidopsis thaliana (Mouse-ear cress).